The chain runs to 254 residues: NH(3)-dependent NAD(+) synthetase (254 aa).

32–39 (GISGGVDS) contributes to the ATP binding site. Aspartate 38 is a binding site for Mg(2+). Arginine 113 lines the deamido-NAD(+) pocket. Threonine 133 contacts ATP. Residue glutamate 138 coordinates Mg(2+). 2 residues coordinate deamido-NAD(+): lysine 146 and aspartate 153. 2 residues coordinate ATP: lysine 162 and serine 184. A deamido-NAD(+)-binding site is contributed by 244 to 245 (HK).

Belongs to the NAD synthetase family. In terms of assembly, homodimer.

It catalyses the reaction deamido-NAD(+) + NH4(+) + ATP = AMP + diphosphate + NAD(+) + H(+). It functions in the pathway cofactor biosynthesis; NAD(+) biosynthesis; NAD(+) from deamido-NAD(+) (ammonia route): step 1/1. In terms of biological role, catalyzes the ATP-dependent amidation of deamido-NAD to form NAD. Uses ammonia as a nitrogen source. This Thermococcus sibiricus (strain DSM 12597 / MM 739) protein is NH(3)-dependent NAD(+) synthetase.